A 121-amino-acid polypeptide reads, in one-letter code: Non-structural protein 8 (121 aa).

The N-terminal stretch at 1 to 15 (MKLLIVFGLLTSVYC) is a signal peptide. An SARS ORF8 Ig-like domain is found at 19-121 (ECSIQECCEN…HDVRVVLDFV (103 aa)). 3 disulfide bridges follow: cysteine 25–cysteine 90, cysteine 37–cysteine 102, and cysteine 61–cysteine 83.

This Bat coronavirus Rp3/2004 (BtCoV/Rp3/2004) protein is Non-structural protein 8.